The following is a 132-amino-acid chain: Small ribosomal subunit protein uS11 (132 aa).

It belongs to the universal ribosomal protein uS11 family. Part of the 30S ribosomal subunit. Interacts with proteins S7 and S18. Binds to IF-3.

Located on the platform of the 30S subunit, it bridges several disparate RNA helices of the 16S rRNA. Forms part of the Shine-Dalgarno cleft in the 70S ribosome. The polypeptide is Small ribosomal subunit protein uS11 (Chlamydia abortus (strain DSM 27085 / S26/3) (Chlamydophila abortus)).